Consider the following 79-residue polypeptide: Acyl carrier protein (79 aa).

The Carrier domain occupies 2–77 (SDVAERVKKI…DAIDFIKANA (76 aa)). Serine 37 is modified (O-(pantetheine 4'-phosphoryl)serine).

The protein belongs to the acyl carrier protein (ACP) family. 4'-phosphopantetheine is transferred from CoA to a specific serine of apo-ACP by AcpS. This modification is essential for activity because fatty acids are bound in thioester linkage to the sulfhydryl of the prosthetic group.

Its subcellular location is the cytoplasm. It functions in the pathway lipid metabolism; fatty acid biosynthesis. Its function is as follows. Carrier of the growing fatty acid chain in fatty acid biosynthesis. This is Acyl carrier protein from Azospirillum brasilense.